Consider the following 419-residue polypeptide: Tol-Pal system protein TolB (419 aa).

An N-terminal signal peptide occupies residues 1–19 (MCNRIISLFLLLFTGQVIA).

It belongs to the TolB family. In terms of assembly, the Tol-Pal system is composed of five core proteins: the inner membrane proteins TolA, TolQ and TolR, the periplasmic protein TolB and the outer membrane protein Pal. They form a network linking the inner and outer membranes and the peptidoglycan layer.

The protein localises to the periplasm. Part of the Tol-Pal system, which plays a role in outer membrane invagination during cell division and is important for maintaining outer membrane integrity. In Legionella pneumophila (strain Paris), this protein is Tol-Pal system protein TolB.